Consider the following 246-residue polypeptide: Probable transcriptional regulatory protein Rmag_0394 (246 aa).

Belongs to the TACO1 family.

It localises to the cytoplasm. This chain is Probable transcriptional regulatory protein Rmag_0394, found in Ruthia magnifica subsp. Calyptogena magnifica.